A 355-amino-acid chain; its full sequence is Histidinol-phosphate aminotransferase 2 (355 aa).

Lys213 is subject to N6-(pyridoxal phosphate)lysine.

The protein belongs to the class-II pyridoxal-phosphate-dependent aminotransferase family. Histidinol-phosphate aminotransferase subfamily. As to quaternary structure, homodimer. Requires pyridoxal 5'-phosphate as cofactor.

It catalyses the reaction L-histidinol phosphate + 2-oxoglutarate = 3-(imidazol-4-yl)-2-oxopropyl phosphate + L-glutamate. The protein operates within amino-acid biosynthesis; L-histidine biosynthesis; L-histidine from 5-phospho-alpha-D-ribose 1-diphosphate: step 7/9. This chain is Histidinol-phosphate aminotransferase 2, found in Burkholderia lata (strain ATCC 17760 / DSM 23089 / LMG 22485 / NCIMB 9086 / R18194 / 383).